Reading from the N-terminus, the 159-residue chain is Ecotin (159 aa).

Residues 1–22 (MRPTPMTAILALSLAAAAPAMA) form the signal peptide. Residues Cys-68 and Cys-105 are joined by a disulfide bond.

This sequence belongs to the protease inhibitor I11 (ecotin) family. Homodimer.

Its subcellular location is the periplasm. In terms of biological role, general inhibitor of family S1 serine proteases. The chain is Ecotin from Pseudomonas putida (strain ATCC 700007 / DSM 6899 / JCM 31910 / BCRC 17059 / LMG 24140 / F1).